Consider the following 599-residue polypeptide: Aspartate--tRNA(Asp/Asn) ligase (599 aa).

An L-aspartate-binding site is contributed by Glu-172. Residues 196–199 form an aspartate region; the sequence is QLFK. Arg-218 contacts L-aspartate. ATP is bound by residues 218–220 and Gln-227; that span reads RDE. Position 451 (His-451) interacts with L-aspartate. Residue Glu-485 coordinates ATP. An L-aspartate-binding site is contributed by Arg-492. An ATP-binding site is contributed by 537–540; sequence GLDR.

It belongs to the class-II aminoacyl-tRNA synthetase family. Type 1 subfamily. Homodimer.

Its subcellular location is the cytoplasm. It carries out the reaction tRNA(Asx) + L-aspartate + ATP = L-aspartyl-tRNA(Asx) + AMP + diphosphate. Functionally, aspartyl-tRNA synthetase with relaxed tRNA specificity since it is able to aspartylate not only its cognate tRNA(Asp) but also tRNA(Asn). Reaction proceeds in two steps: L-aspartate is first activated by ATP to form Asp-AMP and then transferred to the acceptor end of tRNA(Asp/Asn). The sequence is that of Aspartate--tRNA(Asp/Asn) ligase from Aromatoleum aromaticum (strain DSM 19018 / LMG 30748 / EbN1) (Azoarcus sp. (strain EbN1)).